We begin with the raw amino-acid sequence, 244 residues long: Putative lipoprotein LprA (244 aa).

An N-terminal signal peptide occupies residues 1–24; sequence MKHPPCSVVAAATAILAVVLAIGG. Cys25 is lipidated: N-palmitoyl cysteine. Residue Cys25 is the site of S-diacylglycerol cysteine attachment.

The protein belongs to the LppX/LprAFG lipoprotein family.

The protein localises to the cell membrane. The polypeptide is Putative lipoprotein LprA (lprA) (Mycobacterium tuberculosis (strain CDC 1551 / Oshkosh)).